Reading from the N-terminus, the 90-residue chain is Large ribosomal subunit protein bL27 (90 aa).

A disordered region spans residues 1–22; sequence MAHKKSGGSSSNGRDSAGRRLG.

This sequence belongs to the bacterial ribosomal protein bL27 family.

This is Large ribosomal subunit protein bL27 from Caulobacter sp. (strain K31).